An 808-amino-acid polypeptide reads, in one-letter code: MKFYCLIRFMIIANLYSSYQISLPGTYPSQILLDMKNSPLVRFNISTRDYKDETLWIRKNSTFVYIDTAVTTANVIFYLPIGQVRQMVFFKRPISRLLTSNNLVKFINTGSYANHTFKTELSPYLSKTNTPLKKYEIVVDQPTGENPPAGFGSLKPADFLNPGYKFVLTSELVGAYTKRSCFVDPMDSLVPIDYDHVRTIIFGSAGMEILMKMGITLASMTISTKYNPPIELIISAKYRNLSLLWPPRQQYEPVNKGTGRPHWIYLLGVYRNVSDSERDSYMNMIKSLGDSMDYHFLISRAHAQMLILAAEDRLVDEMHSFRNVIARLFVSLFAFIRNAFQSGYTSLNDIIEIEADLRLIVEGISSAAFRKDASTHFLISGTPIKDSKADLIKSLLSKVIRPISGHTRPLSAIQHLFLLRSAYALDIPRQNGSLSEQVSTVALSFIENIHSEAMRDILSWNTTTKHALYYAFASILQRPLTEWGASRNARRAILLASSMCTEEHVIATELAIQELYVKIRSNADPIHLLDVYTPCLSSLRLDLSEHHRIYAMADVVFYPDIQQYLKKKSHEGNMKEDDLETKAEYILTKLRSPLIRTLSAYASEVLSCSDQDLLEINAILILPVSGIGSYVVSRRAGMQGIVYTVDGVDVNNQLFITYTRMPCTTTIGNIVPTVLSRPSGKTCPYCGCVLLRYSADGNIRYSIYISSPKLQSELIAFGNSSIRRFNPTTAQIYGNSLLLYPNGTIVRILAFESERVTIISATYIATAVAGSIIALTVIVITVRMIIINMRYNYQGYNKVIDVDDDIRN.

A signal peptide spans Met-1 to Ser-17. Residues Ser-18–Ala-761 lie on the Virion surface side of the membrane. N-linked (GlcNAc...) asparagine; by host glycosylation is found at Asn-44, Asn-60, Asn-114, Asn-240, Asn-272, Asn-431, Asn-461, Asn-719, and Asn-742. The tract at residues Ala-205–Leu-266 is interaction with gL. The helical transmembrane segment at Thr-762–Val-782 threads the bilayer. At Arg-783 to Asn-808 the chain is on the intravirion side.

Belongs to the herpesviridae glycoprotein H family. As to quaternary structure, interacts with glycoprotein L (gL); this interaction is necessary for the correct processing and cell surface expression of gH. The heterodimer gH/gL seems to interact with gB trimers during fusion. Post-translationally, N-glycosylated, O-glycosylated, and sialylated.

The protein resides in the virion membrane. It localises to the host cell membrane. It is found in the host endosome membrane. Its function is as follows. The heterodimer glycoprotein H-glycoprotein L is required for the fusion of viral and plasma membranes leading to virus entry into the host cell. Following initial binding to host receptor, membrane fusion is mediated by the fusion machinery composed of gB and the heterodimer gH/gL. May also be involved in the fusion between the virion envelope and the outer nuclear membrane during virion morphogenesis. This Gallus gallus (Chicken) protein is Envelope glycoprotein H.